The chain runs to 422 residues: Exodeoxyribonuclease 7 large subunit (422 aa).

Belongs to the XseA family. In terms of assembly, heterooligomer composed of large and small subunits.

It localises to the cytoplasm. It catalyses the reaction Exonucleolytic cleavage in either 5'- to 3'- or 3'- to 5'-direction to yield nucleoside 5'-phosphates.. Bidirectionally degrades single-stranded DNA into large acid-insoluble oligonucleotides, which are then degraded further into small acid-soluble oligonucleotides. The sequence is that of Exodeoxyribonuclease 7 large subunit from Leptospira borgpetersenii serovar Hardjo-bovis (strain JB197).